The primary structure comprises 292 residues: UTP--glucose-1-phosphate uridylyltransferase (292 aa).

The protein belongs to the UDPGP type 2 family.

It catalyses the reaction alpha-D-glucose 1-phosphate + UTP + H(+) = UDP-alpha-D-glucose + diphosphate. May play a role in stationary phase survival. In Mycoplasma genitalium (strain ATCC 33530 / DSM 19775 / NCTC 10195 / G37) (Mycoplasmoides genitalium), this protein is UTP--glucose-1-phosphate uridylyltransferase (galU).